The following is a 209-amino-acid chain: Chaperone protein TorD (209 aa).

This sequence belongs to the TorD/DmsD family. TorD subfamily.

Its subcellular location is the cytoplasm. Functionally, involved in the biogenesis of TorA. Acts on TorA before the insertion of the molybdenum cofactor and, as a result, probably favors a conformation of the apoenzyme that is competent for acquiring the cofactor. The polypeptide is Chaperone protein TorD (Shewanella massilia).